A 451-amino-acid polypeptide reads, in one-letter code: Bifunctional protein GlmU (451 aa).

The pyrophosphorylase stretch occupies residues 1–229 (MQRHAIILAA…FDEIIGVNDR (229 aa)). UDP-N-acetyl-alpha-D-glucosamine-binding positions include 8–11 (LAAG), Lys-22, Gln-72, and 77–78 (GT). Position 102 (Asp-102) interacts with Mg(2+). 3 residues coordinate UDP-N-acetyl-alpha-D-glucosamine: Gly-139, Glu-154, and Asn-227. Residue Asn-227 participates in Mg(2+) binding. The segment at 230-250 (LMLSEAEKALQQRINRYHMEN) is linker. An N-acetyltransferase region spans residues 251–451 (GVTIIDPSST…QVNKEGYLKK (201 aa)). Positions 332 and 350 each coordinate UDP-N-acetyl-alpha-D-glucosamine. The Proton acceptor role is filled by His-362. UDP-N-acetyl-alpha-D-glucosamine is bound by residues Tyr-365 and Asn-376. Acetyl-CoA-binding positions include 385–386 (NY), Ala-422, and Arg-439.

The protein in the N-terminal section; belongs to the N-acetylglucosamine-1-phosphate uridyltransferase family. This sequence in the C-terminal section; belongs to the transferase hexapeptide repeat family. In terms of assembly, homotrimer. The cofactor is Mg(2+).

It is found in the cytoplasm. The catalysed reaction is alpha-D-glucosamine 1-phosphate + acetyl-CoA = N-acetyl-alpha-D-glucosamine 1-phosphate + CoA + H(+). The enzyme catalyses N-acetyl-alpha-D-glucosamine 1-phosphate + UTP + H(+) = UDP-N-acetyl-alpha-D-glucosamine + diphosphate. It functions in the pathway nucleotide-sugar biosynthesis; UDP-N-acetyl-alpha-D-glucosamine biosynthesis; N-acetyl-alpha-D-glucosamine 1-phosphate from alpha-D-glucosamine 6-phosphate (route II): step 2/2. It participates in nucleotide-sugar biosynthesis; UDP-N-acetyl-alpha-D-glucosamine biosynthesis; UDP-N-acetyl-alpha-D-glucosamine from N-acetyl-alpha-D-glucosamine 1-phosphate: step 1/1. The protein operates within bacterial outer membrane biogenesis; LPS lipid A biosynthesis. Functionally, catalyzes the last two sequential reactions in the de novo biosynthetic pathway for UDP-N-acetylglucosamine (UDP-GlcNAc). The C-terminal domain catalyzes the transfer of acetyl group from acetyl coenzyme A to glucosamine-1-phosphate (GlcN-1-P) to produce N-acetylglucosamine-1-phosphate (GlcNAc-1-P), which is converted into UDP-GlcNAc by the transfer of uridine 5-monophosphate (from uridine 5-triphosphate), a reaction catalyzed by the N-terminal domain. In Staphylococcus epidermidis, this protein is Bifunctional protein GlmU.